Here is a 447-residue protein sequence, read N- to C-terminus: Cysteine--tRNA ligase (447 aa).

Cys-28 contributes to the Zn(2+) binding site. Positions 30-40 (PTVYNYIHIGN) match the 'HIGH' region motif. Zn(2+) contacts are provided by Cys-211, His-236, and Glu-240. Positions 268 to 272 (KMSKS) match the 'KMSKS' region motif. Lys-271 lines the ATP pocket.

It belongs to the class-I aminoacyl-tRNA synthetase family. In terms of assembly, monomer. Requires Zn(2+) as cofactor.

It is found in the cytoplasm. It catalyses the reaction tRNA(Cys) + L-cysteine + ATP = L-cysteinyl-tRNA(Cys) + AMP + diphosphate. The polypeptide is Cysteine--tRNA ligase (Streptococcus agalactiae serotype Ia (strain ATCC 27591 / A909 / CDC SS700)).